A 226-amino-acid chain; its full sequence is Large ribosomal subunit protein uL1 (226 aa).

It belongs to the universal ribosomal protein uL1 family. As to quaternary structure, part of the 50S ribosomal subunit.

In terms of biological role, binds directly to 23S rRNA. The L1 stalk is quite mobile in the ribosome, and is involved in E site tRNA release. Functionally, protein L1 is also a translational repressor protein, it controls the translation of the L11 operon by binding to its mRNA. This is Large ribosomal subunit protein uL1 from Mycoplasma mycoides subsp. mycoides SC (strain CCUG 32753 / NCTC 10114 / PG1).